The following is a 308-amino-acid chain: Glycine--tRNA ligase alpha subunit (308 aa).

Belongs to the class-II aminoacyl-tRNA synthetase family. Tetramer of two alpha and two beta subunits.

It localises to the cytoplasm. It catalyses the reaction tRNA(Gly) + glycine + ATP = glycyl-tRNA(Gly) + AMP + diphosphate. In Streptococcus pyogenes serotype M3 (strain SSI-1), this protein is Glycine--tRNA ligase alpha subunit.